Here is a 243-residue protein sequence, read N- to C-terminus: Uridylate kinase (243 aa).

Lys12 to Gly15 serves as a coordination point for ATP. Residues Gly20 to Gly25 are involved in allosteric activation by GTP. Gly56 serves as a coordination point for UMP. Residues Gly57 and Arg61 each contribute to the ATP site. Residues Asp76 and Thr137–Thr144 contribute to the UMP site. The ATP site is built by Asn165, Tyr171, and Asp174.

Belongs to the UMP kinase family. As to quaternary structure, homohexamer.

Its subcellular location is the cytoplasm. It catalyses the reaction UMP + ATP = UDP + ADP. The protein operates within pyrimidine metabolism; CTP biosynthesis via de novo pathway; UDP from UMP (UMPK route): step 1/1. With respect to regulation, allosterically activated by GTP. Inhibited by UTP. Functionally, catalyzes the reversible phosphorylation of UMP to UDP. The polypeptide is Uridylate kinase (Oenococcus oeni (strain ATCC BAA-331 / PSU-1)).